The following is a 233-amino-acid chain: MKTCITKGIVTVSLTAILLSCSSAWAAGKGGIGLAATRLVYSEGEEQISLGVRNTSPDVPYLIQSWVMTPDNKKSADFIITPPLFVLNPANENLLRIMYIGAPLAKDRETLFFTSVRAVPSTTKRKEGNTLKIATQSVIKLFWRPKGLAYPLGEAPAKLRCTSSADMVTVSNPTPYFITLTDLKIGGKVVKNQMISPFDKYQFSLPKGAKNSSVTYRTINDYGAETPQLNCKS.

An N-terminal signal peptide occupies residues 1 to 26; the sequence is MKTCITKGIVTVSLTAILLSCSSAWA.

It belongs to the periplasmic pilus chaperone family.

It localises to the periplasm. Its function is as follows. Part of the elfADCG-ycbUVF fimbrial operon, which promotes adhesion of bacteria to different abiotic surfaces. Could be required for the biogenesis of the ElfA fimbriae. The sequence is that of Probable fimbrial chaperone protein ElfD (elfD) from Escherichia coli (strain K12).